The sequence spans 308 residues: tRNA dimethylallyltransferase (308 aa).

Residue 9–16 participates in ATP binding; that stretch reads GPTAVGKT. Position 11 to 16 (11 to 16) interacts with substrate; the sequence is TAVGKT. An interaction with substrate tRNA region spans residues 34 to 37; the sequence is DSMQ.

This sequence belongs to the IPP transferase family. Monomer. Requires Mg(2+) as cofactor.

The enzyme catalyses adenosine(37) in tRNA + dimethylallyl diphosphate = N(6)-dimethylallyladenosine(37) in tRNA + diphosphate. In terms of biological role, catalyzes the transfer of a dimethylallyl group onto the adenine at position 37 in tRNAs that read codons beginning with uridine, leading to the formation of N6-(dimethylallyl)adenosine (i(6)A). This is tRNA dimethylallyltransferase from Lactobacillus delbrueckii subsp. bulgaricus (strain ATCC BAA-365 / Lb-18).